A 96-amino-acid chain; its full sequence is MPRAYETMLIVRPDLSDEPLEQLLSSQEAILRENGVTHVEITNRGKRRFAGFEMKKFKEGLYIQFNYEAEPNAVAAWEKNLRINESVLRHMTLRVG.

It belongs to the bacterial ribosomal protein bS6 family.

Its function is as follows. Binds together with bS18 to 16S ribosomal RNA. In Synechococcus sp. (strain JA-2-3B'a(2-13)) (Cyanobacteria bacterium Yellowstone B-Prime), this protein is Small ribosomal subunit protein bS6.